The following is a 512-amino-acid chain: UDP-N-acetylmuramoyl-L-alanyl-D-glutamate--2,6-diaminopimelate ligase (512 aa).

Ser-32 contributes to the UDP-N-acetyl-alpha-D-muramoyl-L-alanyl-D-glutamate binding site. Residue 114-120 (GTNGKTT) coordinates ATP. UDP-N-acetyl-alpha-D-muramoyl-L-alanyl-D-glutamate contacts are provided by residues 156–157 (TT), Ser-183, and Arg-191. Lys-223 carries the N6-carboxylysine modification. Meso-2,6-diaminopimelate is bound by residues Arg-395, 419 to 422 (DNPR), Gly-469, and Glu-473. Positions 419-422 (DNPR) match the Meso-diaminopimelate recognition motif motif.

Belongs to the MurCDEF family. MurE subfamily. Mg(2+) serves as cofactor. Post-translationally, carboxylation is probably crucial for Mg(2+) binding and, consequently, for the gamma-phosphate positioning of ATP.

It is found in the cytoplasm. It carries out the reaction UDP-N-acetyl-alpha-D-muramoyl-L-alanyl-D-glutamate + meso-2,6-diaminopimelate + ATP = UDP-N-acetyl-alpha-D-muramoyl-L-alanyl-gamma-D-glutamyl-meso-2,6-diaminopimelate + ADP + phosphate + H(+). Its pathway is cell wall biogenesis; peptidoglycan biosynthesis. Functionally, catalyzes the addition of meso-diaminopimelic acid to the nucleotide precursor UDP-N-acetylmuramoyl-L-alanyl-D-glutamate (UMAG) in the biosynthesis of bacterial cell-wall peptidoglycan. The sequence is that of UDP-N-acetylmuramoyl-L-alanyl-D-glutamate--2,6-diaminopimelate ligase from Chlorobium phaeobacteroides (strain DSM 266 / SMG 266 / 2430).